The primary structure comprises 350 residues: MARSPCCEKNGLKKGPWTSEEDQKLVDYIQKHGYGNWRTLPKNAGLQRCGKSCRLRWTNYLRPDIKRGRFSFEEEETIIQLHSFLGNKWSAIAARLPGRTDNEIKNFWNTHIRKKLLRMGIDPVTHSPRLDLLDISSILASSLYNSSSHHMNMSRLMMDTNRRHHQQHPLVNPEILKLATSLFSQNQNQNLVVDHDSRTQEKQTVYSQTGVNQYQTNQYFENTITQELQSSMPPFPNEARQFNNMDHHFNGFGEQNLVSTSTTSVQDCYNPSFNDYSSSNFVLDPSYSDQSFNFANSVLNTPSSSPSPTTLNSSYINSSSCSTEDEIESYCSNLMKFDIPDFLDVNGFII.

2 HTH myb-type domains span residues 9-65 (KNGL…RPDI) and 66-116 (KRGR…RKKL). 2 consecutive DNA-binding regions (H-T-H motif) follow at residues 37–61 (WRTL…TNYL) and 89–112 (WSAI…NTHI).

Expressed in rosette leaves, cauline leaves and flowers.

It localises to the nucleus. Its function is as follows. Probable transcription factor that may function in osmotic stress and wounding signaling pathways. Contributes to basal resistance against the herbivore Pieris rapae (white cabbage butterfly) feeding. This chain is Transcription factor MYB102, found in Arabidopsis thaliana (Mouse-ear cress).